The chain runs to 131 residues: Heterochromatin silencing protein rss1 (131 aa).

Monomer.

It is found in the cytoplasm. The protein resides in the nucleus. Functionally, required for heterochromatin silencing within pericentromeric repeats and at telomers. Facilitates the recruitment of Clr6 histone deacetylase (HDAC) by interacting with histones. Also interacts with Rad25, which mediates heterochromatin silencing in DNA repeats by recruiting the RITS complex. Together with Rad25, forms a regulatory hub that defines heterochromatin silencing within tandem repeats via linking RNAi and HDAC. The chain is Heterochromatin silencing protein rss1 (rss1) from Schizosaccharomyces pombe (strain 972 / ATCC 24843) (Fission yeast).